We begin with the raw amino-acid sequence, 60 residues long: UPF0434 protein Ent638_1436 (60 aa).

Belongs to the UPF0434 family.

This is UPF0434 protein Ent638_1436 from Enterobacter sp. (strain 638).